We begin with the raw amino-acid sequence, 144 residues long: Large ribosomal subunit protein uL15 (144 aa).

The disordered stretch occupies residues 1–55 (MQLNELKPVAGSRFKRLRKGRGLSSGHGFTSGRGTKGQKAHGKTRLGFEGGQMPL). Positions 23-35 (LSSGHGFTSGRGT) are enriched in gly residues.

This sequence belongs to the universal ribosomal protein uL15 family. Part of the 50S ribosomal subunit.

Binds to the 23S rRNA. In Limosilactobacillus fermentum (strain NBRC 3956 / LMG 18251) (Lactobacillus fermentum), this protein is Large ribosomal subunit protein uL15.